The primary structure comprises 200 residues: Regulator of G-protein signaling 16 (200 aa).

Residues Cys2 and Cys12 are each lipidated (S-palmitoyl cysteine). One can recognise an RGS domain in the interval Ser65–Ala181. 2 positions are modified to phosphotyrosine: Tyr168 and Tyr177.

Interacts with GNAI1 and GNAQ. Interacts with GNAI3, GNAI3 and GNAO1. In terms of assembly, (Microbial infection) Interacts with porcine circovirus 2 ORF3 protein. Palmitoylated on Cys-2 and/or Cys-12. In terms of processing, phosphorylated. Phosphorylation at Tyr-168 by EGFR enhances GTPase accelerating (GAP) activity toward GNAI1.

It is found in the membrane. Its function is as follows. Regulates G protein-coupled receptor signaling cascades. Inhibits signal transduction by increasing the GTPase activity of G protein alpha subunits, thereby driving them into their inactive GDP-bound form. Plays an important role in the phototransduction cascade by regulating the lifetime and effective concentration of activated transducin alpha. May regulate extra and intracellular mitogenic signals. Functionally, (Microbial infection) Gets inactivated and/or degraded by porcine circovirus 2 ORF3 protein, leading to enhanced expression of IL-6 and IL-8 in infected lymphocytes. This would explain chronic inflammatory response of PCV2 infected pigs. The protein is Regulator of G-protein signaling 16 (RGS16) of Sus scrofa (Pig).